The sequence spans 91 residues: Non-specific lipid-transfer protein P5 (91 aa).

4 cysteine pairs are disulfide-bonded: Cys3/Cys50, Cys13/Cys27, Cys28/Cys73, and Cys48/Cys87.

It is found in the secreted. Functionally, plant non-specific lipid-transfer proteins transfer phospholipids as well as galactolipids across membranes. May play a role in wax or cutin deposition in the cell walls of expanding epidermal cells and certain secretory tissues. This Vitis sp. (Grape) protein is Non-specific lipid-transfer protein P5.